The following is a 464-amino-acid chain: MKTVSEQMELARKAQAIVNDYTQEQIDEICLAIGWEVYEDENIAKLAKMAVEETGYGNVQSKIIKHKRKVGGVLHDIKGAKSVGLIERNEETGISKYAKPVGVVCAILPATNPTATCGGKAVGILKGRNAVIFKPSSRALKSTTEAINMMRAGLRKVGAPEDLIQVLEDPSREAITELMKVSDLIVATGSGQVVRAAYSSGTPAYGVGQGNACAIVAEDADVAEAAKMICGSKLFDYATSCSSENAVIPVEAVYDQFMAEMKKNGCYLVTGEDREKLKNHMWKPNAKGKIALNPDIIAKSAQVIADGAGISIPEGTDILLVEGMEPILGDKFHDEKISPVLTVYKAKDFKDAYRILVELTNLVGRGHSCGIHTYKHEYIEFLGEHMKSSRITVRQSMSAGNGGHPFNRMPSTATLGCGTWGGNSTTENVHWRHFINVTWVNEPVAPWTFTDEDMWGDFWKKYGK.

The active-site Nucleophile is Cys-241.

This sequence belongs to the aldehyde dehydrogenase family.

It catalyses the reaction sulfoacetaldehyde + NADP(+) + CoA = sulfoacetyl-CoA + NADPH + H(+). In terms of biological role, involved in the degradation of sulfoacetate. Catalyzes the conversion of sulfoacetyl-CoA and NADPH to sulfoacetaldehyde, CoA and NADP(+). A much lower level of activity (1%) is observed when NADP(+) is replaced with NAD(+). The sequence is that of Sulfoacetaldehyde dehydrogenase (acylating) from Bilophila wadsworthia (strain 3_1_6).